A 360-amino-acid polypeptide reads, in one-letter code: Phospho-N-acetylmuramoyl-pentapeptide-transferase (360 aa).

Topologically, residues Met1 to Arg25 are periplasmic. Residues Ala26–Ala46 form a helical membrane-spanning segment. Residues His47–Thr71 lie on the Cytoplasmic side of the membrane. A helical transmembrane segment spans residues Pro72 to Tyr92. Pro93 is a topological domain (periplasmic). The helical transmembrane segment at Ser94–Val114 threads the bilayer. Residues Asp115–Arg131 lie on the Cytoplasmic side of the membrane. Residues Trp132 to Gly152 traverse the membrane as a helical segment. At Lys153–Asp167 the chain is on the periplasmic side. The helical transmembrane segment at Val168–Gly188 threads the bilayer. The Cytoplasmic segment spans residues Asn189 to Asp198. Residues Gly199–Thr219 traverse the membrane as a helical segment. The Periplasmic portion of the chain corresponds to Gly220–His235. A helical transmembrane segment spans residues Ala236–Phe256. Residues Asn257–Gln262 lie on the Cytoplasmic side of the membrane. Residues Val263–Leu283 traverse the membrane as a helical segment. Residues Leu284 to Glu287 lie on the Periplasmic side of the membrane. The helical transmembrane segment at Phe288–Val308 threads the bilayer. The Cytoplasmic portion of the chain corresponds to Gly309 to Arg337. Residues Val338–Lys358 traverse the membrane as a helical segment. The Periplasmic portion of the chain corresponds to Val359–Arg360.

The protein belongs to the glycosyltransferase 4 family. MraY subfamily. The cofactor is Mg(2+).

It is found in the cell inner membrane. The catalysed reaction is UDP-N-acetyl-alpha-D-muramoyl-L-alanyl-gamma-D-glutamyl-meso-2,6-diaminopimeloyl-D-alanyl-D-alanine + di-trans,octa-cis-undecaprenyl phosphate = di-trans,octa-cis-undecaprenyl diphospho-N-acetyl-alpha-D-muramoyl-L-alanyl-D-glutamyl-meso-2,6-diaminopimeloyl-D-alanyl-D-alanine + UMP. The protein operates within cell wall biogenesis; peptidoglycan biosynthesis. Functionally, catalyzes the initial step of the lipid cycle reactions in the biosynthesis of the cell wall peptidoglycan: transfers peptidoglycan precursor phospho-MurNAc-pentapeptide from UDP-MurNAc-pentapeptide onto the lipid carrier undecaprenyl phosphate, yielding undecaprenyl-pyrophosphoryl-MurNAc-pentapeptide, known as lipid I. This chain is Phospho-N-acetylmuramoyl-pentapeptide-transferase, found in Escherichia coli O7:K1 (strain IAI39 / ExPEC).